Consider the following 160-residue polypeptide: Cyclic pyranopterin monophosphate synthase (160 aa).

Substrate-binding positions include leucine 75–histidine 77 and methionine 113–glutamate 114. The active site involves aspartate 128.

This sequence belongs to the MoaC family. As to quaternary structure, homohexamer; trimer of dimers.

The enzyme catalyses (8S)-3',8-cyclo-7,8-dihydroguanosine 5'-triphosphate = cyclic pyranopterin phosphate + diphosphate. It participates in cofactor biosynthesis; molybdopterin biosynthesis. Functionally, catalyzes the conversion of (8S)-3',8-cyclo-7,8-dihydroguanosine 5'-triphosphate to cyclic pyranopterin monophosphate (cPMP). This chain is Cyclic pyranopterin monophosphate synthase, found in Methylobacterium sp. (strain 4-46).